Consider the following 3218-residue polypeptide: Serine/threonine-protein kinase Smg1 (3218 aa).

Positions leucine 32 to lysine 78 are disordered. Positions asparagine 33–asparagine 43 are enriched in low complexity. The segment covering glutamate 44 to glycine 67 has biased composition (gly residues). A Phosphoserine modification is found at serine 70. In terms of domain architecture, FAT spans aspartate 1289 to arginine 1692. The HEAT repeat unit spans residues alanine 1643–arginine 1678. The region spanning valine 1897 to lysine 2232 is the PI3K/PI4K catalytic domain. The segment at valine 1903–lysine 1909 is G-loop. The segment at glycine 2101 to asparagine 2109 is catalytic loop. The activation loop stretch occupies residues histidine 2121 to threonine 2145. The FATC domain maps to glutamine 3186–valine 3218.

This sequence belongs to the PI3/PI4-kinase family. As to quaternary structure, component of a post-splicing multiprotein NMD complex. The cofactor is Mn(2+).

The protein resides in the cytoplasm. The catalysed reaction is L-seryl-[protein] + ATP = O-phospho-L-seryl-[protein] + ADP + H(+). The enzyme catalyses L-threonyl-[protein] + ATP = O-phospho-L-threonyl-[protein] + ADP + H(+). Serine/threonine protein kinase involved in mRNA surveillance. Recognizes the substrate consensus sequence [ST]-Q. Involved in nonsense-mediated decay (NMD) of mRNAs containing premature stop codons, probably by phosphorylating Upf1. This chain is Serine/threonine-protein kinase Smg1 (nonC), found in Drosophila melanogaster (Fruit fly).